The following is a 352-amino-acid chain: UDP-N-acetylglucosamine--N-acetylmuramyl-(pentapeptide) pyrophosphoryl-undecaprenol N-acetylglucosamine transferase (352 aa).

UDP-N-acetyl-alpha-D-glucosamine is bound by residues 14 to 16 (TGG), Asn124, Arg164, Ser185, and Gln285.

It belongs to the glycosyltransferase 28 family. MurG subfamily.

The protein resides in the cell inner membrane. It carries out the reaction di-trans,octa-cis-undecaprenyl diphospho-N-acetyl-alpha-D-muramoyl-L-alanyl-D-glutamyl-meso-2,6-diaminopimeloyl-D-alanyl-D-alanine + UDP-N-acetyl-alpha-D-glucosamine = di-trans,octa-cis-undecaprenyl diphospho-[N-acetyl-alpha-D-glucosaminyl-(1-&gt;4)]-N-acetyl-alpha-D-muramoyl-L-alanyl-D-glutamyl-meso-2,6-diaminopimeloyl-D-alanyl-D-alanine + UDP + H(+). The protein operates within cell wall biogenesis; peptidoglycan biosynthesis. Cell wall formation. Catalyzes the transfer of a GlcNAc subunit on undecaprenyl-pyrophosphoryl-MurNAc-pentapeptide (lipid intermediate I) to form undecaprenyl-pyrophosphoryl-MurNAc-(pentapeptide)GlcNAc (lipid intermediate II). The polypeptide is UDP-N-acetylglucosamine--N-acetylmuramyl-(pentapeptide) pyrophosphoryl-undecaprenol N-acetylglucosamine transferase (Chlamydia trachomatis serovar A (strain ATCC VR-571B / DSM 19440 / HAR-13)).